The chain runs to 122 residues: Ribosomal silencing factor RsfS (122 aa).

It belongs to the Iojap/RsfS family. As to quaternary structure, interacts with ribosomal protein uL14 (rplN).

Its subcellular location is the cytoplasm. Functions as a ribosomal silencing factor. Interacts with ribosomal protein uL14 (rplN), blocking formation of intersubunit bridge B8. Prevents association of the 30S and 50S ribosomal subunits and the formation of functional ribosomes, thus repressing translation. This Chromobacterium violaceum (strain ATCC 12472 / DSM 30191 / JCM 1249 / CCUG 213 / NBRC 12614 / NCIMB 9131 / NCTC 9757 / MK) protein is Ribosomal silencing factor RsfS.